Reading from the N-terminus, the 579-residue chain is Plastidial pyruvate kinase 2 (579 aa).

Residues 1 to 63 constitute a chloroplast transit peptide; the sequence is MAQVVATRSI…SRRVVDTTVR (63 aa). Residues 6 to 24 show a composition bias toward polar residues; sequence ATRSIQGSMLSPNGGSVST. The tract at residues 6–26 is disordered; sequence ATRSIQGSMLSPNGGSVSTRS. Arg140 serves as a coordination point for substrate. Residues Asn142, Ser144, Asp175, and Thr176 each coordinate K(+). 142 to 145 contacts ATP; sequence NMSH. An ATP-binding site is contributed by Arg182. Lys325 contacts substrate. Glu327 serves as a coordination point for Mg(2+). Gly350, Asp351, and Thr383 together coordinate substrate. Asp351 provides a ligand contact to Mg(2+).

It belongs to the pyruvate kinase family. Oligomer of alpha and beta subunits. Mg(2+) is required as a cofactor. The cofactor is K(+). As to expression, mostly expressed in seeds, and, to a lower extent, in roots, leaves (veins and trichomes), inflorescences, siliques, pollen (grains and tubes) and flowers (sepals and petals).

It localises to the plastid. Its subcellular location is the chloroplast stroma. The protein localises to the mitochondrion. The catalysed reaction is pyruvate + ATP = phosphoenolpyruvate + ADP + H(+). Its pathway is carbohydrate degradation; glycolysis; pyruvate from D-glyceraldehyde 3-phosphate: step 5/5. Functionally, required for plastidial pyruvate kinase activity. Involved in seed oil accumulation, embryo development and seed storage compounds mobilization upon germination. The protein is Plastidial pyruvate kinase 2 (PKP2) of Arabidopsis thaliana (Mouse-ear cress).